Reading from the N-terminus, the 515-residue chain is tRNA pseudouridine synthase Pus10 (515 aa).

Zn(2+) is bound by residues C21 and C24. The stretch at 42–85 (KEVTYELQKYLSHGDPAEENDTPPSKKAKIEEDTSSNEHLGNCE) forms a coiled coil. A disordered region spans residues 55–82 (GDPAEENDTPPSKKAKIEEDTSSNEHLG). Zn(2+) is bound by residues C96 and C99. Residues 291 to 304 (TPWIIDGERKIESS) form an RNA binding forefinger loop region. D331 (nucleophile) is an active-site residue. Positions 428-443 (QKTPLRVLHRRPLASR) are RNA binding thumb loop.

The protein belongs to the pseudouridine synthase Pus10 family.

The protein resides in the nucleus. Its subcellular location is the cytoplasm. The protein localises to the mitochondrion. The enzyme catalyses uridine(55) in tRNA = pseudouridine(55) in tRNA. It catalyses the reaction uridine(54) in tRNA = pseudouridine(54) in tRNA. Its function is as follows. Protein with different functions depending on its subcellular location: involved in miRNA processing in the nucleus and acts as a tRNA pseudouridylate synthase in the cytoplasm. In the cytoplasm, acts as a pseudouridylate synthase by catalyzing synthesis of pseudouridine(54) and pseudouridine(55) from uracil-54 and uracil-55, respectively, in the psi GC loop of a subset of tRNAs. tRNA pseudouridylate synthase activity is enhanced by the presence of 1-methyladenosine at position 53-61 of tRNAs. Does not show tRNA pseudouridylate synthase activity in the nucleus. In the nucleus, promotes primary microRNAs (pri-miRNAs) processing independently of its RNA pseudouridylate synthase activity. Binds pri-miRNAs. This chain is tRNA pseudouridine synthase Pus10, found in Xenopus laevis (African clawed frog).